Reading from the N-terminus, the 406-residue chain is Erythromycin esterase type I (406 aa).

In terms of biological role, this enzyme confers resistance to erythromycin through inactivation by hydrolyzing the lactone ring of the antibiotic. The polypeptide is Erythromycin esterase type I (ereA) (Escherichia coli).